A 465-amino-acid polypeptide reads, in one-letter code: Lactaldehyde dehydrogenase (465 aa).

Position 220–225 (220–225 (GSVEIG)) interacts with NAD(+). Active-site residues include Glu-240 and Cys-274.

It belongs to the aldehyde dehydrogenase family. In terms of assembly, homotetramer.

It carries out the reaction (S)-lactaldehyde + NAD(+) + H2O = (S)-lactate + NADH + 2 H(+). It functions in the pathway cofactor biosynthesis; coenzyme F420 biosynthesis. Functionally, involved in F420 biosynthesis through the oxidation of lactaldehyde to lactate. This Methanococcus maripaludis (strain C7 / ATCC BAA-1331) protein is Lactaldehyde dehydrogenase.